The sequence spans 340 residues: Tartrate-resistant acid phosphatase type 5 (340 aa).

Residues 1-20 (MDTWTVLLILQASLVLPGAV) form the signal peptide. Residues Asp-41, Asp-79, Tyr-82, and Asn-118 each contribute to the Fe cation site. N-linked (GlcNAc...) asparagine glycosylation is found at Asn-124 and Asn-155. The cysteines at positions 169 and 227 are disulfide-linked. Fe cation is bound by residues His-213, His-248, and His-250.

Requires Fe cation as cofactor.

It localises to the secreted. It carries out the reaction a phosphate monoester + H2O = an alcohol + phosphate. Its function is as follows. Uteroferrin is a phosphoprotein phosphatase, synthesized in response to progesterone. It appears to function in transplacental transport of iron in pig. The chain is Tartrate-resistant acid phosphatase type 5 (ACP5) from Sus scrofa (Pig).